The sequence spans 188 residues: UPF0301 protein XC_1365 (188 aa).

This sequence belongs to the UPF0301 (AlgH) family.

This is UPF0301 protein XC_1365 from Xanthomonas campestris pv. campestris (strain 8004).